The primary structure comprises 578 residues: Zinc finger protein with KRAB and SCAN domains 8 (578 aa).

The interval 1-20 (MAEESRKPSAPSPPDQTPEE) is disordered. Residue serine 12 is modified to Phosphoserine. Residue lysine 26 forms a Glycyl lysine isopeptide (Lys-Gly) (interchain with G-Cter in SUMO2) linkage. Positions 51–133 (RLRFRQLCYQ…TLLEDLERQI (83 aa)) constitute an SCAN box domain. Residues 158 to 205 (ASAPEPPNTQLQSEATQHKSPVPQESQERSMSTSQSPTRSQKGSSGDQ) form a disordered region. Over residues 165-205 (NTQLQSEATQHKSPVPQESQERSMSTSQSPTRSQKGSSGDQ) the composition is skewed to polar residues. Residues lysine 176 and lysine 199 each participate in a glycyl lysine isopeptide (Lys-Gly) (interchain with G-Cter in SUMO2) cross-link. Position 201 is a phosphoserine (serine 201). In terms of domain architecture, KRAB spans 220 to 316 (EKIEDMAVSL…GRLERQRGNP (97 aa)). Residues lysine 221, lysine 272, and lysine 288 each participate in a glycyl lysine isopeptide (Lys-Gly) (interchain with G-Cter in SUMO2) cross-link. 2 C2H2-type zinc fingers span residues 322–344 (HKCD…WRIH) and 350–372 (YQCN…QDIH). Glycyl lysine isopeptide (Lys-Gly) (interchain with G-Cter in SUMO2) cross-links involve residues lysine 374 and lysine 376. C2H2-type zinc fingers lie at residues 378-400 (YHCK…QRIH), 406-428 (YQCN…QRIH), 434-456 (YECN…QRIH), 462-484 (YECD…QRSH), 490-512 (YKCN…QRIH), 518-540 (YKCK…LRIH), and 546-568 (YQCN…QRIH). Residues lysine 413 and lysine 441 each participate in a glycyl lysine isopeptide (Lys-Gly) (interchain with G-Cter in SUMO2) cross-link. Residue lysine 502 forms a Glycyl lysine isopeptide (Lys-Gly) (interchain with G-Cter in SUMO2) linkage. Lysine 572 is covalently cross-linked (Glycyl lysine isopeptide (Lys-Gly) (interchain with G-Cter in SUMO2)).

This sequence belongs to the krueppel C2H2-type zinc-finger protein family.

It localises to the nucleus. Its function is as follows. May be involved in transcriptional regulation. The protein is Zinc finger protein with KRAB and SCAN domains 8 (ZKSCAN8) of Pan paniscus (Pygmy chimpanzee).